Consider the following 213-residue polypeptide: MKNLWNIFKKGLIAENPIFVLALSLCPALATTSTAVNGFTMGICVLFVITCNNTVVSIIKNVVNPKVRVPVYITCIATIVTVVELVMQAYAPLLYKQLGIYLALVVVFAIILARAETFASKNPVVPSFFDGLGMGCGFTLALTIIGMIRELFGSGAIFGVNVFGASYNPALIMILPPGGFILIGYLVAIVKVYNQHMEKIKMQKLEKANGGEA.

The next 6 membrane-spanning stretches (helical) occupy residues 11-31 (GLIAENPIFVLALSLCPALAT), 39-59 (FTMGICVLFVITCNNTVVSII), 69-89 (VPVYITCIATIVTVVELVMQA), 93-113 (LLYKQLGIYLALVVVFAIILA), 128-148 (FFDGLGMGCGFTLALTIIGMI), and 170-190 (ALIMILPPGGFILIGYLVAIV).

The protein belongs to the NqrDE/RnfAE family. As to quaternary structure, the complex is composed of six subunits: RnfA, RnfB, RnfC, RnfD, RnfE and RnfG.

Its subcellular location is the cell membrane. Part of a membrane-bound complex that couples electron transfer with translocation of ions across the membrane. Couples electron transfer from reduced ferredoxin to NAD(+) with translocation of H(+) out of the cell. Essential for energy conservation during autotrophic growth. Contributes to ATP synthesis during heterotrophic growth. The protein is Proton-translocating ferredoxin:NAD(+) oxidoreductase complex subunit E of Clostridium ljungdahlii (strain ATCC 55383 / DSM 13528 / PETC).